The following is a 497-amino-acid chain: 4,4'-diapolycopene oxygenase (497 aa).

Belongs to the carotenoid/retinoid oxidoreductase family. Requires FAD as cofactor.

The enzyme catalyses all-trans-4,4'-diapolycopene + 4 AH2 + 4 O2 = all-trans-4,4'-diapolycopene-4,4'-dial + 4 A + 6 H2O. The catalysed reaction is all-trans-4,4'-diaponeurosporene + 2 AH2 + 2 O2 = 4,4'-diaponeurosporenal + 2 A + 3 H2O. Its pathway is carotenoid biosynthesis. Functionally, involved in the biosynthesis of C30 carotenoids. Catalyzes the oxidation of the terminal methyl side groups of 4,4'-diapolycopene to yield 4,4'-diapolycopen-4,4'-dial via the aldehyde intermediate 4,4'-diapolycopen-al. Also able to catalyze the oxidation of the terminal methyl side group of 4,4'-diaponeurosporene to form 4,4'-diaponeurosporen-4-al. It has moderate to low activity on the C40 substrates neurosporene and lycopene, and has no detectable activity on zeta-carotene or beta-carotene. The polypeptide is 4,4'-diapolycopene oxygenase (Methylomonas sp).